Reading from the N-terminus, the 315-residue chain is Bifunctional pinoresinol-lariciresinol reductase (315 aa).

NADP(+)-binding positions include 14 to 20 (GGTGYLG), Arg39, and Lys48. The active-site Proton acceptor is Lys142. NADP(+) is bound at residue Arg146. Position 274 (His274) interacts with substrate.

This sequence belongs to the NmrA-type oxidoreductase family. Isoflavone reductase subfamily. Dimer.

The catalysed reaction is (+)-lariciresinol + NADP(+) = (+)-pinoresinol + NADPH + H(+). It carries out the reaction (-)-secoisolariciresinol + NADP(+) = (+)-lariciresinol + NADPH + H(+). In terms of biological role, reductase involved in lignan (-)-hinokinin biosynthesis. Catalyzes the enantioselective conversion of (+)-pinoresinol into (+)-lariciresinol and of (+)-lariciresinol into (-)-secoisolariciresinol. Abstracts the 4R-hydride from the NADPH cofactor during catalysis. Has also a low phenylcoumaran benzylic ether reductase activity. This Linum corymbulosum (Linum) protein is Bifunctional pinoresinol-lariciresinol reductase (PLR_Lc1).